Here is a 203-residue protein sequence, read N- to C-terminus: NAD(P)H dehydrogenase (quinone) (203 aa).

One can recognise a Flavodoxin-like domain in the interval 3–194 (VLIVYYSMYG…AGARFQGRYV (192 aa)). Residues 9–14 (SMYGHI) and 82–84 (TRF) each bind FMN. Tyr11 serves as a coordination point for NAD(+). Trp102 provides a ligand contact to substrate. FMN-binding positions include 117-123 (SSATQHG) and His138.

Belongs to the WrbA family. It depends on FMN as a cofactor.

The enzyme catalyses a quinone + NADH + H(+) = a quinol + NAD(+). It catalyses the reaction a quinone + NADPH + H(+) = a quinol + NADP(+). The polypeptide is NAD(P)H dehydrogenase (quinone) (Geobacter sulfurreducens (strain ATCC 51573 / DSM 12127 / PCA)).